Consider the following 385-residue polypeptide: Protein-glutamate methylesterase/protein-glutamine glutaminase (385 aa).

Positions 20-138 (RVMIVDDSVV…EASAADIFKH (119 aa)) constitute a Response regulatory domain. Position 71 is a 4-aspartylphosphate (Asp71). In terms of domain architecture, CheB-type methylesterase spans 189–383 (GVTAPRVLLI…PKLVRLFSGD (195 aa)). Active-site residues include Ser201, His229, and Asp325.

This sequence belongs to the CheB family. Post-translationally, phosphorylated by CheA. Phosphorylation of the N-terminal regulatory domain activates the methylesterase activity.

The protein localises to the cytoplasm. The enzyme catalyses [protein]-L-glutamate 5-O-methyl ester + H2O = L-glutamyl-[protein] + methanol + H(+). The catalysed reaction is L-glutaminyl-[protein] + H2O = L-glutamyl-[protein] + NH4(+). In terms of biological role, involved in chemotaxis. Part of a chemotaxis signal transduction system that modulates chemotaxis in response to various stimuli. Catalyzes the demethylation of specific methylglutamate residues introduced into the chemoreceptors (methyl-accepting chemotaxis proteins or MCP) by CheR. Also mediates the irreversible deamidation of specific glutamine residues to glutamic acid. The chain is Protein-glutamate methylesterase/protein-glutamine glutaminase from Rhodopseudomonas palustris (strain BisB5).